The following is a 166-amino-acid chain: Phosphopantetheine adenylyltransferase (166 aa).

Ser-10 contributes to the substrate binding site. Residues 10-11 (SF) and His-18 each bind ATP. The substrate site is built by Lys-42, Ala-79, and Arg-93. ATP contacts are provided by residues 94-96 (GLR), Glu-104, and 129-135 (VRPITAT).

This sequence belongs to the bacterial CoaD family. Homohexamer. The cofactor is Mg(2+).

The protein resides in the cytoplasm. The catalysed reaction is (R)-4'-phosphopantetheine + ATP + H(+) = 3'-dephospho-CoA + diphosphate. It functions in the pathway cofactor biosynthesis; coenzyme A biosynthesis; CoA from (R)-pantothenate: step 4/5. Reversibly transfers an adenylyl group from ATP to 4'-phosphopantetheine, yielding dephospho-CoA (dPCoA) and pyrophosphate. The sequence is that of Phosphopantetheine adenylyltransferase from Methylobacterium nodulans (strain LMG 21967 / CNCM I-2342 / ORS 2060).